The sequence spans 122 residues: Large ribosomal subunit protein uL14c (122 aa).

This sequence belongs to the universal ribosomal protein uL14 family. In terms of assembly, part of the 50S ribosomal subunit.

The protein resides in the plastid. The protein localises to the chloroplast. Its function is as follows. Binds to 23S rRNA. The polypeptide is Large ribosomal subunit protein uL14c (Gnetum parvifolium (Small-leaved jointfir)).